The primary structure comprises 498 residues: ATP synthase subunit beta, chloroplastic (498 aa).

Residue 172–179 coordinates ATP; it reads GGAGVGKT.

It belongs to the ATPase alpha/beta chains family. F-type ATPases have 2 components, CF(1) - the catalytic core - and CF(0) - the membrane proton channel. CF(1) has five subunits: alpha(3), beta(3), gamma(1), delta(1), epsilon(1). CF(0) has four main subunits: a(1), b(1), b'(1) and c(9-12).

The protein localises to the plastid. It localises to the chloroplast thylakoid membrane. The enzyme catalyses ATP + H2O + 4 H(+)(in) = ADP + phosphate + 5 H(+)(out). Produces ATP from ADP in the presence of a proton gradient across the membrane. The catalytic sites are hosted primarily by the beta subunits. The protein is ATP synthase subunit beta, chloroplastic of Daucus carota (Wild carrot).